We begin with the raw amino-acid sequence, 506 residues long: bZIP transcription factor TGA10 (506 aa).

Disordered regions lie at residues 22-50 (VSYMDSSNKNQDPSESNNQISFGGQHQHH) and 113-218 (PSSI…KTLR). 4 stretches are compositionally biased toward polar residues: residues 25–45 (MDSSNKNQDPSESNNQISFGG), 113–124 (PSSIQEQRQNSG), 142–152 (PSTTNKMNTGL), and 160–180 (SKRSSQPSMELSNNLKNNDAP). Over residues 207 to 216 (DAPKTPDPKT) the composition is skewed to basic and acidic residues. Residues 213–257 (DPKTLRRLAQNREAARKSRLRKKAYVQQLESSRIRLTQLEQELQR) enclose the bZIP domain. Residues 215–235 (KTLRRLAQNREAARKSRLRKK) form a basic motif region. Residues 217–224 (LRRLAQNR) carry the Nuclear localization signal motif. Positions 241-255 (LESSRIRLTQLEQEL) are leucine-zipper. A DOG1 domain is found at 288–502 (AAVFDMEYAR…RALSSLWHAR (215 aa)).

This sequence belongs to the bZIP family. As to quaternary structure, binds DNA as a dimer. Interacts with TGA2.2. In terms of tissue distribution, specifically expressed in roots.

Its subcellular location is the nucleus. Functionally, transcription activator that binds to as1-like elements (5'-TGACGTAAgggaTGACGCA-3') in promoters of target genes. Regulates transcription in response to plant signaling molecules salicylic acid (SA), methyl jasmonate (MJ) and auxin (2,4D) only in leaves. Prevents lateral branching and may repress defense signaling. The polypeptide is bZIP transcription factor TGA10 (Nicotiana tabacum (Common tobacco)).